The chain runs to 286 residues: 3-hydroxyanthranilate 3,4-dioxygenase (286 aa).

A domain A (catalytic) region spans residues 1 to 160 (MERRLGVRAW…SEQYRTGKPI (160 aa)). An O2-binding site is contributed by R43. Fe cation-binding residues include H47, E53, and H91. E53 is a binding site for substrate. R95 and E105 together coordinate substrate. A linker region spans residues 161–177 (PDQLLKEPPFPLSTRSI). The domain B stretch occupies residues 178 to 286 (MEPMSLDAWL…QDPACKKPLG (109 aa)).

It belongs to the 3-HAO family. Monomer. It depends on Fe(2+) as a cofactor.

It is found in the cytoplasm. The protein resides in the cytosol. The enzyme catalyses 3-hydroxyanthranilate + O2 = (2Z,4Z)-2-amino-3-carboxymuconate 6-semialdehyde. The protein operates within cofactor biosynthesis; NAD(+) biosynthesis; quinolinate from L-kynurenine: step 3/3. Functionally, catalyzes the oxidative ring opening of 3-hydroxyanthranilate to 2-amino-3-carboxymuconate semialdehyde, which spontaneously cyclizes to quinolinate. This is 3-hydroxyanthranilate 3,4-dioxygenase from Homo sapiens (Human).